The primary structure comprises 155 residues: MSQVILDLQLACEDNSGLPEESQFQKWLDAVIPQFQEESEVTIRVVDEAESHELNLTYRGKDKPTNVLSFPFEAPPGIELPLLGDLIICRQVVEQEAKEQQKPLDAHWAHMVIHGSLHLLGYDHIEDEEAEEMESLETEIMLALGYEDPYIAEKE.

Residues His114, His118, and His124 each coordinate Zn(2+).

The protein belongs to the endoribonuclease YbeY family. Zn(2+) serves as cofactor.

Its subcellular location is the cytoplasm. Functionally, single strand-specific metallo-endoribonuclease involved in late-stage 70S ribosome quality control and in maturation of the 3' terminus of the 16S rRNA. In Enterobacter sp. (strain 638), this protein is Endoribonuclease YbeY.